We begin with the raw amino-acid sequence, 391 residues long: B2 bradykinin receptor (391 aa).

At 1 to 60 the chain is on the extracellular side; the sequence is MFSPWKISMFLSVREDSVPTTASFSADMLNVTLQGPTLNGTFAQSKCPQVEWLGWLNTIQ. 2 N-linked (GlcNAc...) asparagine glycosylation sites follow: asparagine 30 and asparagine 39. The helical transmembrane segment at 61–84 threads the bilayer; sequence PPFLWVLFVLATLENIFVLSVFCL. Residues 85–93 lie on the Cytoplasmic side of the membrane; it reads HKSSCTVAE. A helical transmembrane segment spans residues 94–118; that stretch reads IYLGNLAAADLILACGLPFWAITIS. Residues 119 to 131 are Extracellular-facing; it reads NNFDWLFGETLCR. A disulfide bond links cysteine 130 and cysteine 211. The helical transmembrane segment at 132-153 threads the bilayer; that stretch reads VVNAIISMNLYSSICFLMLVSI. At 154 to 175 the chain is on the cytoplasmic side; it reads DRYLALVKTMSMGRMRGVRWAK. Residue tyrosine 156 is modified to Phosphotyrosine. Residues 176–198 traverse the membrane as a helical segment; that stretch reads LYSLVIWGCTLLLSSPMLVFRTM. At 199 to 221 the chain is on the extracellular side; that stretch reads KEYSDEGHNVTACVISYPSLIWE. Residue asparagine 207 is glycosylated (N-linked (GlcNAc...) asparagine). Residues 222 to 248 traverse the membrane as a helical segment; sequence VFTNMLLNVVGFLLPLSVITFCTMQIM. Topologically, residues 249-267 are cytoplasmic; that stretch reads QVLRNNEMQKFKEIQTERR. A helical transmembrane segment spans residues 268-292; the sequence is ATVLVLVVLLLFIICWLPFQISTFL. Residues 293–311 are Extracellular-facing; it reads DTLHRLGILSSCQDERIID. A helical membrane pass occupies residues 312–335; that stretch reads VITQIASFMAYSNSCLNPLVYVIV. Residues 336 to 391 are Cytoplasmic-facing; sequence GKRFRKKSWEVYQGVCQKGGCRSEPIQMENSMGTLRTSISVERQIHKLQDWAGSRQ. Tyrosine 347 carries the post-translational modification Phosphotyrosine. Cysteine 351 carries S-palmitoyl cysteine lipidation. A Phosphoserine modification is found at serine 366. Threonine 369 carries the phosphothreonine modification. A phosphoserine; by GRK6 mark is found at serine 373 and serine 375.

This sequence belongs to the G-protein coupled receptor 1 family. Bradykinin receptor subfamily. BDKRB2 sub-subfamily. As to quaternary structure, forms a complex with PECAM1 and GNAQ. Interacts with PECAM1. Ubiquitous. Widespread in normal smooth muscle tissue and neurons.

It is found in the cell membrane. In terms of biological role, receptor for bradykinin. It is associated with G proteins that activate a phosphatidylinositol-calcium second messenger system. The protein is B2 bradykinin receptor (BDKRB2) of Homo sapiens (Human).